The chain runs to 495 residues: Ectonucleoside triphosphate diphosphohydrolase 8 (495 aa).

Topologically, residues 1–8 are cytoplasmic; the sequence is MGLSRKEQ. A helical transmembrane segment spans residues 9-29; sequence VFLALLGASGVSGLTALILLL. At 30 to 471 the chain is on the extracellular side; it reads VEATSVLLPT…AESYGVWVAK (442 aa). Asparagine 67 carries an N-linked (GlcNAc...) asparagine glycan. Cysteines 78 and 102 form a disulfide. The Proton acceptor role is filled by glutamate 168. A disulfide bridge connects residues cysteine 246 and cysteine 292. Asparagine 304 carries N-linked (GlcNAc...) asparagine glycosylation. A disulfide bond links cysteine 329 and cysteine 335. The N-linked (GlcNAc...) asparagine glycan is linked to asparagine 363. Cysteine 381 and cysteine 403 are joined by a disulfide. A helical transmembrane segment spans residues 472 to 492; sequence VVFMVLALVAVVGAALVQLFW. Topologically, residues 493–495 are cytoplasmic; that stretch reads LQD.

Belongs to the GDA1/CD39 NTPase family. Requires Ca(2+) as cofactor. The cofactor is Mg(2+). N-glycosylated.

It localises to the cell membrane. The catalysed reaction is a ribonucleoside 5'-triphosphate + 2 H2O = a ribonucleoside 5'-phosphate + 2 phosphate + 2 H(+). Its activity is regulated as follows. Not inhibited by ARL 67156. In terms of biological role, canalicular ectonucleoside NTPDase responsible for the main hepatic NTPDase activity. Ectonucleoside NTPDases catalyze the hydrolysis of gamma- and beta-phosphate residues of nucleotides, playing a central role in concentration of extracellular nucleotides. Has activity toward ATP, ADP, UTP and UDP, but not toward AMP. In Homo sapiens (Human), this protein is Ectonucleoside triphosphate diphosphohydrolase 8 (ENTPD8).